A 190-amino-acid polypeptide reads, in one-letter code: ATP synthase subunit delta (190 aa).

It belongs to the ATPase delta chain family. F-type ATPases have 2 components, F(1) - the catalytic core - and F(0) - the membrane proton channel. F(1) has five subunits: alpha(3), beta(3), gamma(1), delta(1), epsilon(1). F(0) has three main subunits: a(1), b(2) and c(10-14). The alpha and beta chains form an alternating ring which encloses part of the gamma chain. F(1) is attached to F(0) by a central stalk formed by the gamma and epsilon chains, while a peripheral stalk is formed by the delta and b chains.

It localises to the cell inner membrane. In terms of biological role, f(1)F(0) ATP synthase produces ATP from ADP in the presence of a proton or sodium gradient. F-type ATPases consist of two structural domains, F(1) containing the extramembraneous catalytic core and F(0) containing the membrane proton channel, linked together by a central stalk and a peripheral stalk. During catalysis, ATP synthesis in the catalytic domain of F(1) is coupled via a rotary mechanism of the central stalk subunits to proton translocation. Functionally, this protein is part of the stalk that links CF(0) to CF(1). It either transmits conformational changes from CF(0) to CF(1) or is implicated in proton conduction. This Methylobacterium radiotolerans (strain ATCC 27329 / DSM 1819 / JCM 2831 / NBRC 15690 / NCIMB 10815 / 0-1) protein is ATP synthase subunit delta.